The following is a 60-amino-acid chain: SVTIDYDKCKGPECAECVNACPMEVFEIQGDKVVVAKEDDCTFCMVCVDVCPTDAITVKE.

2 consecutive 4Fe-4S ferredoxin-type domains span residues 2-30 (VTID…EIQG) and 31-60 (DKVV…TVKE). Residues cysteine 9, cysteine 14, cysteine 17, cysteine 21, cysteine 41, cysteine 44, cysteine 47, and cysteine 51 each contribute to the [4Fe-4S] cluster site.

It depends on [4Fe-4S] cluster as a cofactor.

Its function is as follows. Ferredoxins are iron-sulfur proteins that transfer electrons probably in the CO-dehydrogenase complex. This Methanothermococcus thermolithotrophicus (Methanococcus thermolithotrophicus) protein is Ferredoxin.